Reading from the N-terminus, the 89-residue chain is Small ribosomal subunit protein bS18 (89 aa).

It belongs to the bacterial ribosomal protein bS18 family. In terms of assembly, part of the 30S ribosomal subunit. Forms a tight heterodimer with protein bS6.

Its function is as follows. Binds as a heterodimer with protein bS6 to the central domain of the 16S rRNA, where it helps stabilize the platform of the 30S subunit. The protein is Small ribosomal subunit protein bS18 of Treponema denticola (strain ATCC 35405 / DSM 14222 / CIP 103919 / JCM 8153 / KCTC 15104).